Reading from the N-terminus, the 609-residue chain is Glutamine--fructose-6-phosphate aminotransferase [isomerizing] (609 aa).

Cys2 acts as the Nucleophile; for GATase activity in catalysis. The 217-residue stretch at 2–218 (CGIVGAIAQR…EGDIAEITRR (217 aa)) folds into the Glutamine amidotransferase type-2 domain. SIS domains follow at residues 286-426 (ADEL…LKGL) and 458-599 (LAED…VDQP). Lys604 serves as the catalytic For Fru-6P isomerization activity.

In terms of assembly, homodimer.

Its subcellular location is the cytoplasm. The catalysed reaction is D-fructose 6-phosphate + L-glutamine = D-glucosamine 6-phosphate + L-glutamate. Functionally, catalyzes the first step in hexosamine metabolism, converting fructose-6P into glucosamine-6P using glutamine as a nitrogen source. This chain is Glutamine--fructose-6-phosphate aminotransferase [isomerizing], found in Shigella flexneri.